We begin with the raw amino-acid sequence, 605 residues long: Tungsten-containing aldehyde ferredoxin oxidoreductase (605 aa).

Tungstopterin contacts are provided by arginine 76, asparagine 93, glycine 95, arginine 182, alanine 183, glycine 185, and arginine 186. Residues cysteine 288, cysteine 291, and cysteine 295 each contribute to the [4Fe-4S] cluster site. Residues aspartate 338, leucine 342, aspartate 343, arginine 444, lysine 450, aspartate 489, and leucine 493 each coordinate tungstopterin. Cysteine 494 provides a ligand contact to [4Fe-4S] cluster. Residue leucine 495 coordinates tungstopterin.

Belongs to the AOR/FOR family. Monomer. Homodimer. [4Fe-4S] cluster serves as cofactor. It depends on tungstopterin as a cofactor.

The catalysed reaction is an aldehyde + 2 oxidized [2Fe-2S]-[ferredoxin] + H2O = a carboxylate + 2 reduced [2Fe-2S]-[ferredoxin] + 3 H(+). With respect to regulation, inhibited by arsenite, iodoacetate and cyanide. Functionally, aldehyde ferredoxin oxidoreductase with a broad substrate specificity. Catalyzes the oxidation of a range of aliphatic aldehydes to their corresponding carboxylic acids. In vitro can use crotonaldehyde, acetaldehyde, formaldehyde, butyraldehyde or glyceraldehyde as substrate, using methyl viologen or ferredoxin, but not NAD(P), as the electron acceptor. Does not oxidize glucose or glyceraldehyde 3-phosphate. May be involved in a pyroglycolytic pathway. This is Tungsten-containing aldehyde ferredoxin oxidoreductase from Pyrococcus furiosus (strain ATCC 43587 / DSM 3638 / JCM 8422 / Vc1).